The primary structure comprises 127 residues: Large ribosomal subunit protein bL20 (127 aa).

The protein belongs to the bacterial ribosomal protein bL20 family.

In terms of biological role, binds directly to 23S ribosomal RNA and is necessary for the in vitro assembly process of the 50S ribosomal subunit. It is not involved in the protein synthesizing functions of that subunit. The polypeptide is Large ribosomal subunit protein bL20 (Streptomyces avermitilis (strain ATCC 31267 / DSM 46492 / JCM 5070 / NBRC 14893 / NCIMB 12804 / NRRL 8165 / MA-4680)).